Reading from the N-terminus, the 361-residue chain is Septin-2 (361 aa).

Phosphotyrosine is present on Y17. In terms of domain architecture, Septin-type G spans K34 to R306. The G1 motif stretch occupies residues G44 to S51. GTP contacts are provided by residues G44–T52, T78, G104, and K183–T186. The segment at D101–G104 is G3 motif. The tract at residues A182–D185 is G4 motif. K190 carries the post-translational modification N6-acetyllysine. Y211 is modified (phosphotyrosine). S218 bears the Phosphoserine mark. 3 residues coordinate GTP: G241, R256, and Y258. Positions W260–H270 are important for dimerization.

The protein belongs to the TRAFAC class TrmE-Era-EngA-EngB-Septin-like GTPase superfamily. Septin GTPase family. As to quaternary structure, septins polymerize into heterooligomeric protein complexes that form filaments, and associate with cellular membranes, actin filaments and microtubules. GTPase activity is required for filament formation. Septin filaments are assembled from asymmetrical heterotrimers, composed of SEPTIN2, SEPTIN6 and SEPTIN7 that associate head-to-head to form a hexameric unit. Interaction between SEPTIN2 and SEPTIN7 seems indirect. Also interacts with SEPTIN9 and SEPTIN5. Interaction with SEPTIN4 not detected. Component of a septin core octameric complex consisting of SEPTIN12, SEPTIN7, SEPTIN6 and SEPTIN2 or SEPTIN4 in the order 12-7-6-2-2-6-7-12 or 12-7-6-4-4-6-7-12 and located in the sperm annulus. Interacts with MAP4. Interacts with DZIP1L. As to expression, widely expressed.

The protein localises to the cytoplasm. Its subcellular location is the cytoskeleton. It is found in the spindle. The protein resides in the chromosome. It localises to the centromere. The protein localises to the kinetochore. Its subcellular location is the cleavage furrow. It is found in the midbody. The protein resides in the cell cortex. It localises to the cell projection. The protein localises to the cilium membrane. Its subcellular location is the cilium. It is found in the flagellum. Its function is as follows. Filament-forming cytoskeletal GTPase. Forms a filamentous structure with SEPTIN12, SEPTIN6, SEPTIN2 and probably SEPTIN4 at the sperm annulus which is required for the structural integrity and motility of the sperm tail during postmeiotic differentiation. Required for normal organization of the actin cytoskeleton. Plays a role in the biogenesis of polarized columnar-shaped epithelium by maintaining polyglutamylated microtubules, thus facilitating efficient vesicle transport, and by impeding MAP4 binding to tubulin. Required for the progression through mitosis. Forms a scaffold at the midplane of the mitotic splindle required to maintain CENPE localization at kinetochores and consequently chromosome congression. During anaphase, may be required for chromosome segregation and spindle elongation. Plays a role in ciliogenesis and collective cell movements. In cilia, required for the integrity of the diffusion barrier at the base of the primary cilium that prevents diffusion of transmembrane proteins between the cilia and plasma membranes: probably acts by regulating the assembly of the tectonic-like complex (also named B9 complex) by localizing TMEM231 protein. The sequence is that of Septin-2 from Mus musculus (Mouse).